We begin with the raw amino-acid sequence, 367 residues long: UDP-N-acetylglucosamine--N-acetylmuramyl-(pentapeptide) pyrophosphoryl-undecaprenol N-acetylglucosamine transferase (367 aa).

UDP-N-acetyl-alpha-D-glucosamine-binding positions include T15 to G17, N127, R163, S191, I249, and Q294.

It belongs to the glycosyltransferase 28 family. MurG subfamily.

It localises to the cell inner membrane. It carries out the reaction di-trans,octa-cis-undecaprenyl diphospho-N-acetyl-alpha-D-muramoyl-L-alanyl-D-glutamyl-meso-2,6-diaminopimeloyl-D-alanyl-D-alanine + UDP-N-acetyl-alpha-D-glucosamine = di-trans,octa-cis-undecaprenyl diphospho-[N-acetyl-alpha-D-glucosaminyl-(1-&gt;4)]-N-acetyl-alpha-D-muramoyl-L-alanyl-D-glutamyl-meso-2,6-diaminopimeloyl-D-alanyl-D-alanine + UDP + H(+). Its pathway is cell wall biogenesis; peptidoglycan biosynthesis. In terms of biological role, cell wall formation. Catalyzes the transfer of a GlcNAc subunit on undecaprenyl-pyrophosphoryl-MurNAc-pentapeptide (lipid intermediate I) to form undecaprenyl-pyrophosphoryl-MurNAc-(pentapeptide)GlcNAc (lipid intermediate II). The polypeptide is UDP-N-acetylglucosamine--N-acetylmuramyl-(pentapeptide) pyrophosphoryl-undecaprenol N-acetylglucosamine transferase (Burkholderia pseudomallei (strain 1710b)).